Reading from the N-terminus, the 1372-residue chain is DNA-directed RNA polymerase subunit beta (1372 aa).

The protein belongs to the RNA polymerase beta chain family. The RNAP catalytic core consists of 2 alpha, 1 beta, 1 beta' and 1 omega subunit. When a sigma factor is associated with the core the holoenzyme is formed, which can initiate transcription.

It catalyses the reaction RNA(n) + a ribonucleoside 5'-triphosphate = RNA(n+1) + diphosphate. DNA-dependent RNA polymerase catalyzes the transcription of DNA into RNA using the four ribonucleoside triphosphates as substrates. This chain is DNA-directed RNA polymerase subunit beta, found in Psychrobacter cryohalolentis (strain ATCC BAA-1226 / DSM 17306 / VKM B-2378 / K5).